Here is a 250-residue protein sequence, read N- to C-terminus: 3-deoxy-manno-octulosonate cytidylyltransferase (250 aa).

This sequence belongs to the KdsB family.

The protein resides in the cytoplasm. It catalyses the reaction 3-deoxy-alpha-D-manno-oct-2-ulosonate + CTP = CMP-3-deoxy-beta-D-manno-octulosonate + diphosphate. It participates in nucleotide-sugar biosynthesis; CMP-3-deoxy-D-manno-octulosonate biosynthesis; CMP-3-deoxy-D-manno-octulosonate from 3-deoxy-D-manno-octulosonate and CTP: step 1/1. The protein operates within bacterial outer membrane biogenesis; lipopolysaccharide biosynthesis. Functionally, activates KDO (a required 8-carbon sugar) for incorporation into bacterial lipopolysaccharide in Gram-negative bacteria. This Francisella tularensis subsp. holarctica (strain LVS) protein is 3-deoxy-manno-octulosonate cytidylyltransferase.